Reading from the N-terminus, the 171-residue chain is Bursicon (171 aa).

The signal sequence occupies residues Met1–Ala31. 5 disulfide bridges follow: Cys47–Cys96, Cys61–Cys110, Cys71–Cys131, Cys75–Cys133, and Cys93–Cys136. A CTCK domain is found at Cys47–Thr137.

In terms of assembly, heterodimer of burs and pburs.

It localises to the secreted. Final heterodimeric neurohormone released at the end of the molting cycle, involved in the sclerotization (tanning) of the insect cuticle, melanization and wing spreading. The sequence is that of Bursicon from Culex pipiens pipiens (Northern house mosquito).